We begin with the raw amino-acid sequence, 350 residues long: MSISQLSRKNVQALTPYQSARRLGGNGDVWLNANEYPTSPDFNLSERIFNRYPEPQPEAVIKGYAAYADVKPENVIVTRGGDESIELLIKGFCEPEDKVLYCPPTYGMYAVSAETLGIATKTVPLTEDFQLDLPEIEKNLAGVKVIFVCSPNNPTGNVLNQADLIRLLDITAGSAIVVVDEAYIEFSPETSMIKQLGNYPHLAIIRTLSKAFALAGLRCGFTLANPELIGVLQKVIAPYPLPVPVSDIAAQALQPQGVAQMKMRVADVLANRAWLIGELKQIPSVVKIFATEANYVLVKFQDGEKVFNALWEKGIILRDQHKAFGLKNCIRISIGTRAELEKTVVALKLA.

Position 210 is an N6-(pyridoxal phosphate)lysine (Lys-210).

Belongs to the class-II pyridoxal-phosphate-dependent aminotransferase family. Histidinol-phosphate aminotransferase subfamily. Homodimer. The cofactor is pyridoxal 5'-phosphate.

It catalyses the reaction L-histidinol phosphate + 2-oxoglutarate = 3-(imidazol-4-yl)-2-oxopropyl phosphate + L-glutamate. Its pathway is amino-acid biosynthesis; L-histidine biosynthesis; L-histidine from 5-phospho-alpha-D-ribose 1-diphosphate: step 7/9. This chain is Histidinol-phosphate aminotransferase 2, found in Mannheimia succiniciproducens (strain KCTC 0769BP / MBEL55E).